We begin with the raw amino-acid sequence, 576 residues long: Citrinin biosynthesis transcriptional activator ctnR (576 aa).

The segment at 1 to 27 (MLSHEMASTAHRQPSRPTTRQRQRTGR) is disordered. Residues 29–56 (CEECRRRKLRCDGQQPRCGVCVDSGVTC) constitute a DNA-binding region (zn(2)-C6 fungal-type). Positions 102–148 (STPLTNDHHDGCSVSSASSRSDSNPPPTVSEPDMSLPNTTTSVSSAP) are disordered. The segment covering 114-124 (SVSSASSRSDS) has biased composition (low complexity). Residues 137–148 (LPNTTTSVSSAP) are compositionally biased toward polar residues.

Its subcellular location is the nucleus. Transcription factor that regulates the expression of the gene cluster that mediates the biosynthesis of the mycotoxin citrinin, a hepato-nephrotoxic compound to humans due to inhibition of respiration complex III. This is Citrinin biosynthesis transcriptional activator ctnR from Monascus purpureus (Red mold).